The sequence spans 407 residues: MKRTFIMVLDSFGIGASADAKKFGDEGADTLGHIAEACARGEANVGRSGPLTLPNLSRLGLGKAAEESTGTFPVGLDKNADIIGAYGYASELSSGKDTPSGHWEIAGVPVLFDWGYFSDVENSFPQELLDKLVKRANLSGYLGNCHSSGTVILDQLGEEHMKTGKPIFYTSADSVFQIACHEETFGLDRLYELCEIAREELTDGGYNIGRVIARPFIGDKPGHFQRTGNRHDLAVEPPAPTMLKKLVDEKGGEVVSIGKIADIYAQVGITQKVKATGLDALFDATIEEMKKAGDNTIVFTNFVDFDSSYGHRRDVAGYAAALELFDRRLPELMALIKEDDILILTADHGCDPTWPGTDHTREHIPVLVYGPKVKPGSLGHRETFADIGQTVAAYFGLSPMDYGKNML.

The Mn(2+) site is built by Asp-10, Asp-306, His-311, Asp-347, His-348, and His-359.

The protein belongs to the phosphopentomutase family. Requires Mn(2+) as cofactor.

The protein resides in the cytoplasm. It catalyses the reaction 2-deoxy-alpha-D-ribose 1-phosphate = 2-deoxy-D-ribose 5-phosphate. It carries out the reaction alpha-D-ribose 1-phosphate = D-ribose 5-phosphate. The protein operates within carbohydrate degradation; 2-deoxy-D-ribose 1-phosphate degradation; D-glyceraldehyde 3-phosphate and acetaldehyde from 2-deoxy-alpha-D-ribose 1-phosphate: step 1/2. Its function is as follows. Isomerase that catalyzes the conversion of deoxy-ribose 1-phosphate (dRib-1-P) and ribose 1-phosphate (Rib-1-P) to deoxy-ribose 5-phosphate (dRib-5-P) and ribose 5-phosphate (Rib-5-P), respectively. The sequence is that of Phosphopentomutase from Yersinia pestis bv. Antiqua (strain Angola).